Here is a 377-residue protein sequence, read N- to C-terminus: EPS I polysaccharide export outer membrane protein EpsA (377 aa).

Residues 1–23 form the signal peptide; the sequence is MFVSIPSIRKTVMSLCAVPLMAA. A lipid anchor (N-palmitoyl cysteine) is attached at C24. Residue C24 is the site of S-diacylglycerol cysteine attachment.

Belongs to the BexD/CtrA/VexA family.

Its subcellular location is the cell outer membrane. Functionally, probably involved in polymerization and/or export of exopolysaccharide EPS I which functions as a virulence factor. The sequence is that of EPS I polysaccharide export outer membrane protein EpsA (epsA) from Ralstonia solanacearum (Pseudomonas solanacearum).